We begin with the raw amino-acid sequence, 199 residues long: MNPRKKVDLKLIIVGAIGVGKTSLLHQYVHKTFYEEYQTTLGASILSKIIILGDTTLKLQIWDTGGQERFRSMVSTFYKGSDGCILAFDVTDLESFEALDIWRGDVLAKIVPMEQSYPMVLLGNKIDLADRKVPQEVAQGWCREKDIPYFEVSAKNDINVVQAFEMLASRALSRYQSILENHLTESIKLSPDQSRSRCC.

Residues glycine 15 to threonine 22, tyrosine 34 to threonine 40, aspartate 63 to glutamine 67, asparagine 124 to aspartate 127, and alanine 154 to lysine 155 contribute to the GTP site. 2 short sequence motifs (switch) span residues tyrosine 28–leucine 41 and glutamine 67–aspartate 82. Residue serine 186 is modified to Phosphoserine. S-geranylgeranyl cysteine attachment occurs at residues cysteine 198 and cysteine 199.

It belongs to the small GTPase superfamily. Rab family. Expressed in heart, placenta, lung, skeletal muscle and peripheral blood leukocyte.

It localises to the late endosome. Its subcellular location is the lysosome. The protein resides in the golgi apparatus. It is found in the trans-Golgi network. The protein localises to the cytoplasmic vesicle. It localises to the phagosome. Its subcellular location is the phagosome membrane. Its function is as follows. Controls vesicular trafficking from endosomes to the trans-Golgi network (TGN). Acts as a negative regulator of TLR9 signaling and can suppress TLR9-triggered TNFA, IL6, and IFNB production in macrophages by promoting TLR9 lysosomal degradation. Also negatively regulates TLR4 signaling in macrophages by promoting lysosomal degradation of TLR4. Promotes megakaryocytic differentiation by increasing NF-kappa-B-dependent IL6 production and subsequently enhancing the association of STAT3 with GATA1. Not involved in the regulation of the EGF- and EGFR degradation pathway. This chain is Ras-related protein Rab-7b (RAB7B), found in Homo sapiens (Human).